A 400-amino-acid polypeptide reads, in one-letter code: Telomere repeat-binding protein 6 (400 aa).

One can recognise a Ubiquitin-like domain in the interval 173–252 (VKFGIKSLNI…DDENLGSLGF (80 aa)). The HTH myb-type domain occupies 310 to 369 (VQRRIRRPFTVSEVEALVQAVERLGTGRWRDVKSHAFNHVNHRTYVDLKDKWKTLVHTAK). The segment at residues 338–365 (WRDVKSHAFNHVNHRTYVDLKDKWKTLV) is a DNA-binding region (H-T-H motif).

In terms of assembly, homodimer. As to expression, expressed ubiquitously.

It localises to the nucleus. Binds specifically to the plant telomeric double-stranded DNA sequences. At least 4 repeats of telomeric sequences are required for binding. The polypeptide is Telomere repeat-binding protein 6 (TRP6) (Arabidopsis thaliana (Mouse-ear cress)).